A 608-amino-acid chain; its full sequence is Microtubule-associated protein 70-3 (608 aa).

Residues 1 to 23 (MADGVEEGNAVAPRGPARRRGTV) are disordered. Positions 40–346 (DPVRVELTRL…ARSEAQLKEK (307 aa)) form a coiled coil. The tract at residues 224-458 (ILDKLQRQKV…HLLNRSTDAV (235 aa)) is required for targeting to microtubules. Disordered regions lie at residues 354–493 (LEDG…TANN) and 570–608 (DKEQEVKARRLGSSKGTGSSQVLSGSRSSSRSGLTRNYQ). Residues 363-379 (SGSSRLPTEGKSFSNGP) show a composition bias toward polar residues. Over residues 402–421 (RRSPSFHSRSSLSSSSSLVL) the composition is skewed to low complexity. Positions 476–493 (IENTNSNTDESNKETANN) are enriched in polar residues. A coiled-coil region spans residues 542 to 576 (LTKAMEVEAKKMRREVAAMEKEVAAMRVDKEQEVK). Positions 586–608 (TGSSQVLSGSRSSSRSGLTRNYQ) are enriched in low complexity.

The protein belongs to the MAP70 family.

It localises to the cytoplasm. The protein resides in the cytoskeleton. Functionally, plant-specific protein that interact with microtubules. This chain is Microtubule-associated protein 70-3 (MAP70.3), found in Oryza sativa subsp. japonica (Rice).